The primary structure comprises 150 residues: FAD synthase (150 aa).

Residues 11 to 12, 16 to 19, Asp96, and Tyr124 each bind ATP; these read TF and HPGH.

The protein belongs to the archaeal FAD synthase family. As to quaternary structure, homodimer. A divalent metal cation is required as a cofactor.

It catalyses the reaction FMN + ATP + H(+) = FAD + diphosphate. It functions in the pathway cofactor biosynthesis; FAD biosynthesis; FAD from FMN: step 1/1. In terms of biological role, catalyzes the transfer of the AMP portion of ATP to flavin mononucleotide (FMN) to produce flavin adenine dinucleotide (FAD) coenzyme. The protein is FAD synthase of Methanocaldococcus fervens (strain DSM 4213 / JCM 15782 / AG86) (Methanococcus fervens).